A 440-amino-acid chain; its full sequence is uncharacterized protein (440 aa).

12 helical membrane passes run 24-44 (VVIG…APAA), 47-67 (AGSG…CNAI), 93-113 (FWGY…CAAM), 117-137 (VGFY…VVAL), 155-175 (IVAV…GSGA), 183-203 (IGVD…FFAF), 229-249 (LALG…IAVL), 276-296 (VVQI…ILGV), 323-343 (PFRA…TADI), 346-366 (AIGF…ASAL), 379-399 (IPLV…LSSV), and 400-420 (AAGA…RIIT).

It belongs to the amino acid-polyamine-organocation (APC) superfamily.

Its subcellular location is the cell membrane. Functionally, probable amino-acid or metabolite transport protein. This is an uncharacterized protein from Mycobacterium bovis (strain ATCC BAA-935 / AF2122/97).